Reading from the N-terminus, the 223-residue chain is N-acetylmuramate alpha-1-phosphate uridylyltransferase (223 aa).

Residues 11–13 (GER) and lysine 23 contribute to the UTP site. Asparagine 105 is a substrate binding site. Position 107 (aspartate 107) interacts with Mg(2+). Positions 140 and 205 each coordinate substrate. Aspartate 205 is a Mg(2+) binding site.

The protein belongs to the nucleotidyltransferase MurU family. As to quaternary structure, monomer. The cofactor is Mg(2+).

The catalysed reaction is N-acetyl-alpha-D-muramate 1-phosphate + UDP + H(+) = UDP-N-acetyl-alpha-D-muramate + phosphate. The protein operates within cell wall biogenesis; peptidoglycan recycling. Its activity is regulated as follows. Is completely inhibited by EDTA in vitro. Catalyzes the formation of UDP-N-acetylmuramate (UDP-MurNAc), a crucial precursor of the bacterial peptidoglycan cell wall, from UTP and MurNAc-alpha-1P. Is involved in peptidoglycan recycling as part of a cell wall recycling pathway that bypasses de novo biosynthesis of the peptidoglycan precursor UDP-MurNAc. Plays a role in intrinsic resistance to fosfomycin, which targets the de novo synthesis of UDP-MurNAc. Is not able to use GlcNAc-alpha-1P and GalNAc-alpha-1P as substrates. Cannot accept other nucleotide triphosphates (ATP, CTP, TTP, or GTP) than UTP. This Pseudomonas putida (strain ATCC 47054 / DSM 6125 / CFBP 8728 / NCIMB 11950 / KT2440) protein is N-acetylmuramate alpha-1-phosphate uridylyltransferase.